Reading from the N-terminus, the 188-residue chain is Large ribosomal subunit protein eL18 (188 aa).

Residue Lys119 forms a Glycyl lysine isopeptide (Lys-Gly) (interchain with G-Cter in SUMO2) linkage. Phosphoserine is present on Ser130. The disordered stretch occupies residues 150 to 188 (RHFGKAPGTPHSHTKPYVRSKGRKFERARGRRASRGYKN). Thr158 carries the post-translational modification Phosphothreonine. Basic residues-rich tracts occupy residues 161 to 171 (SHTKPYVRSKG) and 178 to 188 (RGRRASRGYKN). Lys164 is covalently cross-linked (Glycyl lysine isopeptide (Lys-Gly) (interchain with G-Cter in SUMO2)).

It belongs to the eukaryotic ribosomal protein eL18 family. In terms of assembly, component of the large ribosomal subunit.

It is found in the cytoplasm. It localises to the cytosol. Its subcellular location is the rough endoplasmic reticulum. Component of the large ribosomal subunit. The ribosome is a large ribonucleoprotein complex responsible for the synthesis of proteins in the cell. The protein is Large ribosomal subunit protein eL18 (RPL18) of Bos taurus (Bovine).